A 404-amino-acid chain; its full sequence is uncharacterized protein (404 aa).

Over residues 262 to 278 (VSTGDTSPYGTEDSSPA) the composition is skewed to polar residues. Disordered stretches follow at residues 262–307 (VSTG…SPSL) and 320–340 (KKSH…GGAD). 3 positions are modified to phosphoserine: Ser268, Ser276, and Ser279. A phosphothreonine mark is found at Thr290 and Thr293. Phosphoserine is present on residues Ser304, Ser306, Ser324, Ser358, and Ser362. Basic and acidic residues predominate over residues 320-336 (KKSHSANDSEEFFREDD).

This is an uncharacterized protein from Rattus norvegicus (Rat).